A 239-amino-acid chain; its full sequence is MGTNIHIDMVIHGKHTAEIRKMFNRVAQAYDRTNLVLSFLQDAHWRRAACKMLGVTAGEEVLDVGAGTGASTRTVARTGAAVTGIDISPRMLQIARNRCKRFQNITWRLTNGDLPFPDKSFDAILMVFCLRNVSNIQGFLCDAARVLKPGGRLVVCEFSHPRRFVAPFYRLYLRYVLPRLAKLISSDPAAYEYLTESIEDWYEVDELAFMLEQCGFQNTSWKRLSFGAVALHRALRGPE.

Residues Thr68, Asp86, and 111–112 contribute to the S-adenosyl-L-methionine site; that span reads NG.

It belongs to the class I-like SAM-binding methyltransferase superfamily. MenG/UbiE family.

The enzyme catalyses a 2-demethylmenaquinol + S-adenosyl-L-methionine = a menaquinol + S-adenosyl-L-homocysteine + H(+). It participates in quinol/quinone metabolism; menaquinone biosynthesis; menaquinol from 1,4-dihydroxy-2-naphthoate: step 2/2. In terms of biological role, methyltransferase required for the conversion of demethylmenaquinol (DMKH2) to menaquinol (MKH2). The chain is Demethylmenaquinone methyltransferase from Tropheryma whipplei (strain TW08/27) (Whipple's bacillus).